We begin with the raw amino-acid sequence, 2079 residues long: Protein xmas (2079 aa).

Residues K12 to N83 form the RRM domain. The interval N112–R152 is disordered. The 184-residue stretch at D342–Y525 folds into the PCI domain. The tract at residues P835–A1359 is sufficient for Orc3 binding. 4 disordered regions span residues R1335–M1360, A1755–A1778, K1930–A1963, and S2032–L2079. Over residues H1764–K1776 the composition is skewed to basic residues. Positions P2048–V2059 are enriched in low complexity. The span at G2070–L2079 shows a compositional bias: polar residues.

Belongs to the SAC3 family. In terms of assembly, component of the nuclear pore complex (NPC)-associated TREX-2/AMEX complex (anchoring and mRNA export complex), composed of e(y)2, xmas and PCID2. Within the TREX-2/ AMEX complex, interactions with e(y)2 is required for localization of e(y)2 to the nuclear periphery. Interaction between the TREX-2/AMEX complex and the ORC complex is required for ORC localization to mRNPs, and consequently mRNA export. Within the TREX-2/AMEX-ORC complex, interacts with Orc6, (via C-terminus) with Orc3, and weakly interacts with Orc4. However, another report found that the interaction with Orc3 is not direct, instead it is mediated via e(y)2. Interacts with piwi. In terms of tissue distribution, expressed in ovaries (at protein level). As to expression, detected in the testes and ovaries, with expression levels higher in oocytes than in testicular cells (at protein level). Detected in the testes and ovaries (at protein level). In terms of tissue distribution, detected in the testes.

The protein resides in the nucleus. Its subcellular location is the nucleoplasm. It localises to the nucleus membrane. The protein localises to the cytoplasm. Involved in mRNA export and mRNA coupled transcription activation. Component of the nuclear pore complex (NPC)-associated TREX-2/AMEX complex (anchoring and mRNA export complex) which functions in docking export-competent ribonucleoprotein particles (mRNPs) to the nuclear entrance of the nuclear pore complex (nuclear basket), thereby enabling the export of mRNAs to the cytoplasm through the nuclear pores. The TREX-2/AMEX complex also functions with the transcriptional coactivator SAGA/TFTC complex, to anchor a subset of transcription sites to the nuclear pore complex basket in order to achieve efficient transcription and export of their resulting mRNAs. Within the complex, required for localization of e(y)2 to the nuclear periphery. The sequence is that of Protein xmas from Drosophila melanogaster (Fruit fly).